We begin with the raw amino-acid sequence, 198 residues long: Recombination protein RecR (198 aa).

The C4-type zinc-finger motif lies at 57 to 72; sequence CSICCNLSEHDPCPIC. One can recognise a Toprim domain in the interval 80–175; that stretch reads NIVCVVETPQ…KVTRLGYGLP (96 aa).

This sequence belongs to the RecR family.

Its function is as follows. May play a role in DNA repair. It seems to be involved in an RecBC-independent recombinational process of DNA repair. It may act with RecF and RecO. The polypeptide is Recombination protein RecR (Endomicrobium trichonymphae).